We begin with the raw amino-acid sequence, 869 residues long: Leucine--tRNA ligase (869 aa).

The short motif at 42–52 (PYPSGNLHMGH) is the 'HIGH' region element. Positions 622–626 (KMSKS) match the 'KMSKS' region motif. Lysine 625 contributes to the ATP binding site.

The protein belongs to the class-I aminoacyl-tRNA synthetase family.

The protein resides in the cytoplasm. The catalysed reaction is tRNA(Leu) + L-leucine + ATP = L-leucyl-tRNA(Leu) + AMP + diphosphate. This chain is Leucine--tRNA ligase, found in Synechocystis sp. (strain ATCC 27184 / PCC 6803 / Kazusa).